A 125-amino-acid polypeptide reads, in one-letter code: SOSS complex subunit C homolog A (125 aa).

The segment covering 1–16 (MAFPNTSAQQAETNSK) has biased composition (polar residues). 3 disordered regions span residues 1-20 (MAFPNTSAQQAETNSKSLEE), 38-74 (SNTNQMPAPQLLGQPSTTTATPDLVSTNSTPPRAAFN), and 105-125 (PATPSTTTPPITPIANANNPK).

It belongs to the SOSS-C family.

The polypeptide is SOSS complex subunit C homolog A (Drosophila willistoni (Fruit fly)).